Here is a 471-residue protein sequence, read N- to C-terminus: Siroheme synthase 1 (471 aa).

Residues 1 to 203 are precorrin-2 dehydrogenase /sirohydrochlorin ferrochelatase; sequence MDYLPLFAEL…GNSAEAEKAL (203 aa). NAD(+) contacts are provided by residues 22-23 and 43-44; these read EI and ET. Position 128 is a phosphoserine (S128). The segment at 215-471 is uroporphyrinogen-III C-methyltransferase; sequence GEIILVGAGP…GFNASVVNLA (257 aa). An S-adenosyl-L-methionine-binding site is contributed by P224. The active-site Proton acceptor is the D247. K269 functions as the Proton donor in the catalytic mechanism. S-adenosyl-L-methionine-binding positions include 300 to 302, I305, 330 to 331, M382, and G411; these read GGD and TA.

In the N-terminal section; belongs to the precorrin-2 dehydrogenase / sirohydrochlorin ferrochelatase family. This sequence in the C-terminal section; belongs to the precorrin methyltransferase family.

It carries out the reaction uroporphyrinogen III + 2 S-adenosyl-L-methionine = precorrin-2 + 2 S-adenosyl-L-homocysteine + H(+). The catalysed reaction is precorrin-2 + NAD(+) = sirohydrochlorin + NADH + 2 H(+). It catalyses the reaction siroheme + 2 H(+) = sirohydrochlorin + Fe(2+). It participates in cofactor biosynthesis; adenosylcobalamin biosynthesis; precorrin-2 from uroporphyrinogen III: step 1/1. Its pathway is cofactor biosynthesis; adenosylcobalamin biosynthesis; sirohydrochlorin from precorrin-2: step 1/1. It functions in the pathway porphyrin-containing compound metabolism; siroheme biosynthesis; precorrin-2 from uroporphyrinogen III: step 1/1. The protein operates within porphyrin-containing compound metabolism; siroheme biosynthesis; siroheme from sirohydrochlorin: step 1/1. It participates in porphyrin-containing compound metabolism; siroheme biosynthesis; sirohydrochlorin from precorrin-2: step 1/1. In terms of biological role, multifunctional enzyme that catalyzes the SAM-dependent methylations of uroporphyrinogen III at position C-2 and C-7 to form precorrin-2 via precorrin-1. Then it catalyzes the NAD-dependent ring dehydrogenation of precorrin-2 to yield sirohydrochlorin. Finally, it catalyzes the ferrochelation of sirohydrochlorin to yield siroheme. This is Siroheme synthase 1 from Klebsiella pneumoniae subsp. pneumoniae (strain ATCC 700721 / MGH 78578).